We begin with the raw amino-acid sequence, 569 residues long: Urease subunit alpha (569 aa).

Positions 136, 138, and 219 each coordinate Ni(2+). Lys-219 is modified (N6-carboxylysine). Position 221 (His-221) interacts with substrate. The Ni(2+) site is built by His-248 and His-274. The active-site Proton donor is His-322. Residue Asp-362 coordinates Ni(2+).

It belongs to the metallo-dependent hydrolases superfamily. Urease alpha subunit family. In terms of assembly, heterotrimer of UreA (gamma), UreB (beta) and UreC (alpha) subunits. Three heterotrimers associate to form the active enzyme. Ni cation is required as a cofactor. In terms of processing, carboxylation allows a single lysine to coordinate two nickel ions.

Its subcellular location is the cytoplasm. The enzyme catalyses urea + 2 H2O + H(+) = hydrogencarbonate + 2 NH4(+). Its pathway is nitrogen metabolism; urea degradation; CO(2) and NH(3) from urea (urease route): step 1/1. The polypeptide is Urease subunit alpha (Dinoroseobacter shibae (strain DSM 16493 / NCIMB 14021 / DFL 12)).